The following is a 325-amino-acid chain: tRNA (guanine-N(7)-)-methyltransferase (325 aa).

The segment at 1–101 is disordered; it reads MSEATDKQKQ…LEYPKSPESM (101 aa). The span at 51 to 69 shows a compositional bias: polar residues; the sequence is VSTTPEPEQSDSSATTATI. S-adenosyl-L-methionine-binding positions include Gly122, 145-146, 199-200, and Cys219; these read EI and NA. The active site involves Asp222. Residue 297–299 participates in S-adenosyl-L-methionine binding; the sequence is TEE.

It belongs to the class I-like SAM-binding methyltransferase superfamily. TrmB family. Forms a complex with TRM82.

Its subcellular location is the nucleus. The enzyme catalyses guanosine(46) in tRNA + S-adenosyl-L-methionine = N(7)-methylguanosine(46) in tRNA + S-adenosyl-L-homocysteine. The protein operates within tRNA modification; N(7)-methylguanine-tRNA biosynthesis. Functionally, catalyzes the formation of N(7)-methylguanine at position 46 (m7G46) in tRNA. The protein is tRNA (guanine-N(7)-)-methyltransferase of Candida albicans (strain SC5314 / ATCC MYA-2876) (Yeast).